Here is a 220-residue protein sequence, read N- to C-terminus: MADGSGARFPRFSELCAKYAAQLAAAETRSVYAFSARPITGGEPVSLGFLRGRVLLIENVASLUGSTVREYTQMNELQRRLGARGLVVLGFPCNQFGHQENAQNAEILPSLKHVRPGNGFEPNFMLFEKCEVNGARAHPLFAFLREALPAPSDDMSTLVSDPQLIAWSPVCRNDVAWNFEKFLVGADGTPVRRYSHRCQTLAVEPDIEALLPPPARGYYA.

Selenocysteine 64 is a catalytic residue. Position 64 (selenocysteine 64) is a non-standard amino acid, selenocysteine.

Belongs to the glutathione peroxidase family. In terms of processing, during periods of oxidative stress, Sec-64 may react with a superoxide radical, irreversibly lose hydroselenide and be converted to dehydroalanine.

It carries out the reaction 2 glutathione + H2O2 = glutathione disulfide + 2 H2O. In terms of biological role, may protect the virus and component of infected cells from oxidative damage by peroxides whose formation may be stimulated by infection. This chain is Glutathione peroxidase (GPX1), found in Homo sapiens (Human).